We begin with the raw amino-acid sequence, 2183 residues long: Genome polyprotein (2183 aa).

A lipid anchor (N-myristoyl glycine; by host) is attached at glycine 2. At 2 to 1493 (GAQVSTQKTG…HVSRAFICLQ (1492 aa)) the chain is on the cytoplasmic side. Residues 566–582 (FYQGPTEESVERAMGRV) form an amphipathic alpha-helix region. Active-site for protease 2A activity residues include histidine 870 and aspartate 888. Zn(2+)-binding residues include cysteine 905 and cysteine 907. Cysteine 959 acts as the For protease 2A activity in catalysis. Zn(2+)-binding residues include cysteine 965 and histidine 967. The tract at residues 1099–1171 (NNGWLKKFTE…EQSAPSQSDQ (73 aa)) is membrane-binding. The interval 1099 to 1237 (NNGWLKKFTE…SPGAGKSVAT (139 aa)) is oligomerization. The interval 1120–1124 (AVKIQ) is RNA-binding. The 157-residue stretch at 1203–1359 (EKKMSNYIQF…SMYSQNGKIN (157 aa)) folds into the SF3 helicase domain. Residues cysteine 1367, cysteine 1379, and cysteine 1384 each coordinate Zn(2+). Residues 1367-1384 (CDEECCPVNFKRCCPLVC) form a C4-type; degenerate zinc finger. The interval 1411 to 1418 (EYNHRHSV) is RNA-binding. Residues 1422–1427 (LEALFQ) are oligomerization. An intramembrane segment occupies 1494–1509 (ALTTFVSVAGIIYIIY). Over 1510 to 2183 (KLFAGFQGAY…TLRRKWLDSF (674 aa)) the chain is Cytoplasmic. Tyrosine 1519 is modified (O-(5'-phospho-RNA)-tyrosine). One can recognise a Peptidase C3 domain in the interval 1539-1717 (GPAFEFAVAM…FSAGLLKHYF (179 aa)). Residues histidine 1578, glutamate 1609, and cysteine 1685 each act as for protease 3C activity in the active site. Positions 1948–2064 (GHLIAFDYSG…SYPWPIDASL (117 aa)) constitute a RdRp catalytic domain. Mg(2+) is bound by residues aspartate 1954 and aspartate 2050.

Belongs to the picornaviruses polyprotein family. In terms of assembly, interacts with capsid protein VP1 and capsid protein VP3 to form heterotrimeric protomers. Interacts with capsid protein VP0, and capsid protein VP3 to form heterotrimeric protomers. Five protomers subsequently associate to form pentamers which serve as building blocks for the capsid. Interacts with capsid protein VP2, capsid protein VP3 and capsid protein VP4 following cleavage of capsid protein VP0. Interacts with host CXADR. As to quaternary structure, interacts with capsid protein VP1 and capsid protein VP3 in the mature capsid. In terms of assembly, interacts with capsid protein VP0 and capsid protein VP1 to form heterotrimeric protomers. Five protomers subsequently associate to form pentamers which serve as building blocks for the capsid. Interacts with capsid protein VP4 in the mature capsid. Interacts with protein 2C; this interaction may be important for virion morphogenesis. Interacts with capsid protein VP1 and capsid protein VP3. As to quaternary structure, homodimer. In terms of assembly, homohexamer; forms a hexameric ring structure with 6-fold symmetry characteristic of AAA+ ATPases. Interacts (via N-terminus) with host RTN3 (via reticulon domain); this interaction is important for viral replication. Interacts with capsid protein VP3; this interaction may be important for virion morphogenesis. Interacts with protein 3CD. As to quaternary structure, homodimer. Interacts with host GBF1. Interacts (via GOLD domain) with host ACBD3 (via GOLD domain); this interaction allows the formation of a viral protein 3A/ACBD3 heterotetramer with a 2:2 stoichiometry, which will stimulate the recruitment of host PI4KB in order to synthesize PI4P at the viral RNA replication sites. In terms of assembly, interacts with RNA-directed RNA polymerase. Interacts with protein 3AB and with RNA-directed RNA polymerase. As to quaternary structure, interacts with Viral protein genome-linked and with protein 3CD. Mg(2+) is required as a cofactor. In terms of processing, specific enzymatic cleavages in vivo by the viral proteases yield processing intermediates and the mature proteins. Post-translationally, myristoylation is required for the formation of pentamers during virus assembly. Further assembly of 12 pentamers and a molecule of genomic RNA generates the provirion. During virion maturation, immature virions are rendered infectious following cleavage of VP0 into VP4 and VP2. This maturation seems to be an autocatalytic event triggered by the presence of RNA in the capsid and it is followed by a conformational change infectious virion. In terms of processing, myristoylation is required during RNA encapsidation and formation of the mature virus particle. Post-translationally, VPg is uridylylated by the polymerase into VPg-pUpU. This acts as a nucleotide-peptide primer for the genomic RNA replication.

It is found in the virion. It localises to the host cytoplasm. The protein localises to the host cytoplasmic vesicle membrane. The protein resides in the host nucleus. The enzyme catalyses a ribonucleoside 5'-triphosphate + H2O = a ribonucleoside 5'-diphosphate + phosphate + H(+). The catalysed reaction is Selective cleavage of Tyr-|-Gly bond in the picornavirus polyprotein.. It catalyses the reaction RNA(n) + a ribonucleoside 5'-triphosphate = RNA(n+1) + diphosphate. It carries out the reaction Selective cleavage of Gln-|-Gly bond in the poliovirus polyprotein. In other picornavirus reactions Glu may be substituted for Gln, and Ser or Thr for Gly.. With respect to regulation, replication or transcription is subject to high level of random mutations by the nucleotide analog ribavirin. Its function is as follows. Forms an icosahedral capsid of pseudo T=3 symmetry with capsid proteins VP2 and VP3. The capsid is 300 Angstroms in diameter, composed of 60 copies of each capsid protein and enclosing the viral positive strand RNA genome. Capsid protein VP1 mainly forms the vertices of the capsid. Capsid protein VP1 interacts with host CXADR to provide virion attachment to target host cells. This attachment induces virion internalization. Tyrosine kinases are probably involved in the entry process. After binding to its receptor, the capsid undergoes conformational changes. Capsid protein VP1 N-terminus (that contains an amphipathic alpha-helix) and capsid protein VP4 are externalized. Together, they shape a pore in the host membrane through which viral genome is translocated to host cell cytoplasm. In terms of biological role, forms an icosahedral capsid of pseudo T=3 symmetry with capsid proteins VP2 and VP3. The capsid is 300 Angstroms in diameter, composed of 60 copies of each capsid protein and enclosing the viral positive strand RNA genome. Functionally, lies on the inner surface of the capsid shell. After binding to the host receptor, the capsid undergoes conformational changes. Capsid protein VP4 is released, Capsid protein VP1 N-terminus is externalized, and together, they shape a pore in the host membrane through which the viral genome is translocated into the host cell cytoplasm. Component of immature procapsids, which is cleaved into capsid proteins VP4 and VP2 after maturation. Allows the capsid to remain inactive before the maturation step. Its function is as follows. Cysteine protease that cleaves viral polyprotein and specific host proteins. It is responsible for the autocatalytic cleavage between the P1 and P2 regions, which is the first cleavage occurring in the polyprotein. Also cleaves the host translation initiation factor EIF4G1, in order to shut down the capped cellular mRNA translation. Inhibits the host nucleus-cytoplasm protein and RNA trafficking by cleaving host members of the nuclear pores. Counteracts stress granule formation probably by antagonizing its assembly or promoting its dissassembly. Cleaves and inhibits host IFIH1/MDA5, thereby inhibiting the type-I IFN production and the establishment of the antiviral state. Cleaves and inhibits host MAVS, thereby inhibiting the type-I IFN production and the establishment of the antiviral state. In terms of biological role, plays an essential role in the virus replication cycle by acting as a viroporin. Creates a pore in the host endoplasmic reticulum and as a consequence releases Ca2+ in the cytoplasm of infected cell. In turn, high levels of cytoplasmic calcium may trigger membrane trafficking and transport of viral ER-associated proteins to viroplasms, sites of viral genome replication. Functionally, induces and associates with structural rearrangements of intracellular membranes. Displays RNA-binding, nucleotide binding and NTPase activities. May play a role in virion morphogenesis and viral RNA encapsidation by interacting with the capsid protein VP3. Localizes the viral replication complex to the surface of membranous vesicles. Together with protein 3CD binds the Cis-Active RNA Element (CRE) which is involved in RNA synthesis initiation. Acts as a cofactor to stimulate the activity of 3D polymerase, maybe through a nucleid acid chaperone activity. Its function is as follows. Localizes the viral replication complex to the surface of membranous vesicles. It inhibits host cell endoplasmic reticulum-to-Golgi apparatus transport and causes the disassembly of the Golgi complex, possibly through GBF1 interaction. This would result in depletion of MHC, trail receptors and IFN receptors at the host cell surface. Plays an essential role in viral RNA replication by recruiting ACBD3 and PI4KB at the viral replication sites, thereby allowing the formation of the rearranged membranous structures where viral replication takes place. In terms of biological role, acts as a primer for viral RNA replication and remains covalently bound to viral genomic RNA. VPg is uridylylated prior to priming replication into VPg-pUpU. The oriI viral genomic sequence may act as a template for this. The VPg-pUpU is then used as primer on the genomic RNA poly(A) by the RNA-dependent RNA polymerase to replicate the viral genome. During genome replication, the VPg-RNA linkage is removed by the host TDP2, thereby accelerating replication. During the late stage of the replication cycle, host TDP2 is excluded from sites of viral RNA synthesis and encapsidation, allowing for the generation of progeny virions. Functionally, involved in the viral replication complex and viral polypeptide maturation. It exhibits protease activity with a specificity and catalytic efficiency that is different from protease 3C. Protein 3CD lacks polymerase activity. Protein 3CD binds to the 5'UTR of the viral genome. Replicates the viral genomic RNA on the surface of intracellular membranes. May form linear arrays of subunits that propagate along a strong head-to-tail interaction called interface-I. Covalently attaches UMP to a tyrosine of VPg, which is used to prime RNA synthesis. The positive stranded RNA genome is first replicated at virus induced membranous vesicles, creating a dsRNA genomic replication form. This dsRNA is then used as template to synthesize positive stranded RNA genomes. ss(+)RNA genomes are either translated, replicated or encapsidated. Its function is as follows. Major viral protease that mediates proteolytic processing of the polyprotein. Cleaves host EIF5B, contributing to host translation shutoff. Also cleaves host PABPC1, contributing to host translation shutoff. Cleaves host NLRP1, triggers host N-glycine-mediated degradation of the autoinhibitory NLRP1 N-terminal fragment. This Coxsackievirus B4 (strain JVB / Benschoten / New York/51) protein is Genome polyprotein.